A 356-amino-acid polypeptide reads, in one-letter code: Septin-12 (356 aa).

The segment at 1-23 (MDERRTPSPCSSRPSSPRTPPCE) is disordered. A compositionally biased stretch (low complexity) spans 7–16 (PSPCSSRPSS). The region spanning 44–315 (TGFEFNIMVV…ENYRVLRLNE (272 aa)) is the Septin-type G domain. Residues 44 to 317 (TGFEFNIMVV…YRVLRLNESH (274 aa)) form an interaction with SEPTIN7 region. The interval 54 to 61 (GQSGLGKS) is G1 motif. Residues 54 to 61 (GQSGLGKS), T87, G113, 193 to 201 (RADSLTIEE), G249, and R264 each bind GTP. Positions 110-113 (DTPG) are G3 motif. The interval 192–195 (ARAD) is G4 motif. Positions 256-356 (VNGRCVLGRK…RSKDPRDDEC (101 aa)) are self-association (via N-terminus) to polymerize octameric septin 12-7-6-2/4-2/4-6-7-12 filaments. The disordered stretch occupies residues 330–356 (PASPGQLMAPGPEKVRKRSKDPRDDEC).

It belongs to the TRAFAC class TrmE-Era-EngA-EngB-Septin-like GTPase superfamily. Septin GTPase family. As to quaternary structure, septins polymerize into heterooligomeric protein complexes that form filaments, and can associate with cellular membranes, actin filaments and microtubules. GTPase activity is required for filament formation. Interacts with SEPTIN6 and SEPTIN11. Self-associates. Component of a octameric complex consisting of SEPTIN12, SEPTIN7, SEPTIN6 and SEPTIN2 or SEPTIN4 in the order 12-7-6-2-2-6-7-12 or 12-7-6-4-4-6-7-12 and located in the sperm annulus; the octamer polymerizes into filaments via the SEPTIN12 N- and C-termini; the SEPTIN12:SEPTIN7 association is mediated by the GTP-binding domains. Interacts with SPAG4 and LMNB1. Associates with alpha- and beta-tubulins. In terms of tissue distribution, predominantly expressed in testis and epididymis. Component of the sperm tail annulus (at protein level).

The protein resides in the cytoplasm. The protein localises to the cytoskeleton. It is found in the spindle. It localises to the cell projection. Its subcellular location is the cilium. The protein resides in the flagellum. Functionally, filament-forming cytoskeletal GTPase. May play a role in cytokinesis (Potential). Involved in spermatogenesis. Involved in the morphogenesis of sperm heads and the elongation of sperm tails probably implicating the association with alpha- and beta-tubulins. Forms a filamentous structure with SEPTIN7, SEPTIN6, SEPTIN2 and probably SEPTIN4 at the sperm annulus which is required for the structural integrity and motility of the sperm tail during postmeiotic differentiation. The protein is Septin-12 of Rattus norvegicus (Rat).